Here is an 881-residue protein sequence, read N- to C-terminus: Ribonucleoside-diphosphate reductase large subunit (881 aa).

The 92-residue stretch at 69 to 160 (TIYLDHNGSI…MTNLHDNTSD (92 aa)) folds into the ATP-cone domain. Substrate is bound by residues T271, 286–287 (SC), G315, 493–497 (NLCCE), and 675–679 (PTAST). Cysteines 287 and 510 form a disulfide. N493 (proton acceptor) is an active-site residue. Residue C495 is the Cysteine radical intermediate of the active site. The active-site Proton acceptor is the E497.

The protein belongs to the ribonucleoside diphosphate reductase large chain family. As to quaternary structure, heterotetramer composed of a homodimer of the large subunit (R1) and a homodimer of the small subunit (R2). Larger multisubunit protein complex are also active, composed of (R1)n(R2)n.

The catalysed reaction is a 2'-deoxyribonucleoside 5'-diphosphate + [thioredoxin]-disulfide + H2O = a ribonucleoside 5'-diphosphate + [thioredoxin]-dithiol. With respect to regulation, under complex allosteric control mediated by deoxynucleoside triphosphates and ATP binding. The type of nucleotide bound at the specificity site determines substrate preference. It seems probable that ATP makes the enzyme reduce CDP and UDP, dGTP favors ADP reduction and dTTP favors GDP reduction. In terms of biological role, ribonucleoside-diphosphate reductase holoenzyme provides the precursors necessary for viral DNA synthesis. Allows virus growth in non-dividing cells. Catalyzes the biosynthesis of deoxyribonucleotides from the corresponding ribonucleotides. The chain is Ribonucleoside-diphosphate reductase large subunit (RNR1) from Acanthamoeba polyphaga mimivirus (APMV).